A 503-amino-acid polypeptide reads, in one-letter code: N-fatty-acyl-amino acid synthase/hydrolase PM20D1 (503 aa).

An N-terminal signal peptide occupies residues 1–24; sequence MAELLASLPAWAAVLLLFFATVSG. Asparagine 72 carries an N-linked (GlcNAc...) asparagine glycan. Residue histidine 125 coordinates Zn(2+). The active site involves aspartate 127. Zn(2+) is bound at residue aspartate 157. Residue glutamate 191 is the Proton acceptor of the active site. 2 residues coordinate Zn(2+): glutamate 192 and aspartate 218. The N-linked (GlcNAc...) asparagine glycan is linked to asparagine 443. Residue histidine 465 participates in Zn(2+) binding.

It belongs to the peptidase M20A family. Requires Zn(2+) as cofactor. In addition to being detected in blood (at protein level), PM20D1 is also highly expressed in other tissues including brown adipocytes, liver and kidney. It is also expressed in small intestine, large intestine, heart and pancreas.

It is found in the secreted. The enzyme catalyses an N-acyl-L-amino acid + H2O = an L-alpha-amino acid + a carboxylate. The catalysed reaction is an N-acyl-aromatic L-alpha-amino acid + H2O = an aromatic L-alpha-amino acid + a carboxylate. It catalyses the reaction N-(5Z,8Z,11Z,14Z)-eicosatetraenoyl-glycine + H2O = (5Z,8Z,11Z,14Z)-eicosatetraenoate + glycine. It carries out the reaction N-hexadecanoyl-L-phenylalanine + H2O = hexadecanoate + L-phenylalanine. The enzyme catalyses N-octadecanoyl-L-phenylalanine + H2O = octadecanoate + L-phenylalanine. The catalysed reaction is N-(4Z,7Z,10Z,13Z,16Z,19Z-docosahexaenoyl)-L-phenylalanine + H2O = (4Z,7Z,10Z,13Z,16Z,19Z)-docosahexaenoate + L-phenylalanine. It catalyses the reaction N-(9Z-octadecenoyl)-L-asparagine + H2O = L-asparagine + (9Z)-octadecenoate. It carries out the reaction (9Z)-octadecenoate + glycine = N-(9Z-octadecenoyl)glycine + H2O. The enzyme catalyses N-(9Z-octadecenoyl)-L-lysine + H2O = L-lysine + (9Z)-octadecenoate. The catalysed reaction is N-(9Z-octadecenoyl)-L-methionine + H2O = (9Z)-octadecenoate + L-methionine. It catalyses the reaction N-(9Z-octadecenoyl)-L-serine + H2O = L-serine + (9Z)-octadecenoate. It carries out the reaction N-(9Z-octadecenoyl)-L-tryptophan + H2O = L-tryptophan + (9Z)-octadecenoate. The enzyme catalyses N-(9Z-octadecenoyl)-L-tyrosine + H2O = L-tyrosine + (9Z)-octadecenoate. The catalysed reaction is N-(9Z-octadecenoyl)-L-glutamine + H2O = L-glutamine + (9Z)-octadecenoate. It catalyses the reaction N-(5Z,8Z,11Z,14Z-eicosatetraenoyl)-L-serine + H2O = (5Z,8Z,11Z,14Z)-eicosatetraenoate + L-serine. It carries out the reaction (5Z,8Z,11Z,14Z)-eicosatetraenoate + L-phenylalanine = N-(5Z,8Z,11Z,14Z-eicosatetraenoyl)-L-phenylalanine + H2O. The enzyme catalyses N-(9Z-octadecenoyl)-L-leucine + H2O = L-leucine + (9Z)-octadecenoate. The catalysed reaction is L-phenylalanine + (9Z)-octadecenoate = N-(9Z-octadecenoyl)-L-phenylalanine + H2O. It functions in the pathway amino-acid metabolism. Its pathway is energy metabolism; electron transfer. The protein operates within lipid metabolism; fatty acid metabolism. Lipoproteins are powerful coactivators of PM20D1 activity in vitro and NAA biosynthesis in vivo. In terms of biological role, secreted enzyme that regulates the endogenous N-fatty acyl amino acid (NAAs) tissue and circulating levels by functioning as a bidirectional NAA synthase/hydrolase. It condenses free fatty acids and free amino acids to generate NAAs and bidirectionally catalyzes the reverse hydrolysis reaction. Some of these NAAs stimulate oxidative metabolism via mitochondrial uncoupling, increasing energy expenditure in a UPC1-independent manner. Thereby, this secreted protein may indirectly regulate whole body energy expenditure. PM20D1 circulates in tight association with both low- and high-density (LDL and HDL,respectively) lipoprotein particles. This chain is N-fatty-acyl-amino acid synthase/hydrolase PM20D1, found in Mus musculus (Mouse).